The following is a 468-amino-acid chain: Maltose fermentation regulatory protein MAL33 (468 aa).

A DNA-binding region (zn(2)-C6 fungal-type) is located at residues 8-34; it reads CDYCRVRRVKCDGKKPCSRCIEHNFDC. Residues 41-49 carry the Nuclear localization signal motif; it reads KKRGSKPIG.

Belongs to the MAL13 family.

Its subcellular location is the nucleus. In terms of biological role, regulates the coordinate transcription of structural MAL3S (maltase) and MAL3T (maltose permease) genes. This Saccharomyces cerevisiae (strain ATCC 204508 / S288c) (Baker's yeast) protein is Maltose fermentation regulatory protein MAL33 (MAL33).